We begin with the raw amino-acid sequence, 1170 residues long: MGLAWGLGVLLLLHACGSNRIPESGGDNSVFDIFELTGAARKRSGRRLVKGPDPSSPAFRIEDANLIPPVPDKKFQDLVDAVRAEKGFLLLASLRQMKKTRGTLLAVERKDHSGQVFSVISNGKAGTLDLSLTVQGKQHVVSVEEALLATGQWKSITLFVQEDRAQLYIDCEKMENAELDVPIQSIFTRDLASIARLRIAKGGVNDNFQGVLQNVRFVFGTTPEDILRNKGCSSSTSVFVTLDNNVVNGSSPAIRTDYIGHKTKDLQAICGISCDELSSMVLELRGLRTIVTTLQDSIRKVTEENKELANELRRPPLCYHNGVQYRTGDEWTVDSCTECRCQNSVTICKKVSCPIMPCSNATVPDGECCPRCWPSDSADDGWSPWSEWTSCSVTCGNGIQQRGRSCDSLNNRCEGSSVQTRTCHIQECDKRFKQDGGWSHWSPWSSCSVTCGDGVITRIRLCNSPSPQMNGKPCEGKARETKACQKDSCPINGGWGPWSPWDICSVTCGGGVQKRSRLCNNPKPQFGGKDCVGDVTENQICNKQDCPIDGCLSNPCFAGVQCTSYPDGSWKCGACPPGYSGDGVECKDVDECKEVPDACFNHNGEHRCENTDPGYNCLPCPPRFTGSQPFGRGVEHATANKQVCKPRNPCTDGTHDCNKNAKCNYLGHYSDPMYRCECKPGYAGNGIICGEDTDLDGWPNEDLLCVANATYHCRKDNCPNLPNSGQEDYDKDGIGDACDDDDDNDKIPDDRDNCPFHYNPAQYDYDRDDVGDRCDNCPYNHNPDQADTDNNGEGDACAADIDGDSILNERDNCQYVYNVDQKDTDMDGVGDQCDNCPLEHNPDQLDSDSDRIGDTCDNNQDIDEDGHQNNLDNCPYVPNANQADHDKDGKGDACDHDDDNDGIPDDRDNCRLVPNPDQKDSDGDGRGDACKDDFDQDKVPDIDDICPENVDISETDFRRFQMIPLDPKGTSQNDPNWVVRHQGKELVQTVNCDPGLAVGYDEFNAVDFSGTFFINTERDDDYAGFVFGYQSSSRFYVVMWKQVTQSYWDTNPTRAQGYSGLSVKVVNSTTGPGEHLRNALWHTGNTSGQVRTLWHDPRHIGWKDFTAYRWHLSHRPKTGFIRVVMYEGKKIMADSGPIYDKTYAGGRLGLFVFSQEMVFFSDLKYECRDS.

Positions 1 to 18 (MGLAWGLGVLLLLHACGS) are cleaved as a signal peptide. The heparin-binding stretch occupies residues 47–95 (RLVKGPDPSSPAFRIEDANLIPPVPDKKFQDLVDAVRAEKGFLLLASLR). In terms of domain architecture, Laminin G-like spans 65–270 (NLIPPVPDKK…HKTKDLQAIC (206 aa)). An intrachain disulfide couples cysteine 171 to cysteine 232. N-linked (GlcNAc...) asparagine glycans are attached at residues asparagine 248 and asparagine 360. The region spanning 316-373 (PLCYHNGVQYRTGDEWTVDSCTECRCQNSVTICKKVSCPIMPCSNATVPDGECCPRCW) is the VWFC domain. TSP type-1 domains are found at residues 379–429 (DDGW…QECD), 435–490 (DGGW…DSCP), and 492–547 (NGGW…QDCP). Cystine bridges form between cysteine 391–cysteine 423, cysteine 395–cysteine 428, cysteine 406–cysteine 413, cysteine 447–cysteine 484, cysteine 451–cysteine 489, cysteine 462–cysteine 474, cysteine 504–cysteine 541, cysteine 508–cysteine 546, cysteine 519–cysteine 531, cysteine 551–cysteine 562, cysteine 556–cysteine 572, cysteine 575–cysteine 586, cysteine 592–cysteine 608, cysteine 599–cysteine 617, cysteine 620–cysteine 644, cysteine 650–cysteine 663, cysteine 657–cysteine 676, cysteine 678–cysteine 689, cysteine 705–cysteine 713, cysteine 718–cysteine 738, cysteine 754–cysteine 774, cysteine 777–cysteine 797, cysteine 813–cysteine 833, cysteine 836–cysteine 856, cysteine 874–cysteine 894, cysteine 910–cysteine 930, and cysteine 946–cysteine 1167. The EGF-like 1 domain maps to 547–587 (PIDGCLSNPCFAGVQCTSYPDGSWKCGACPPGYSGDGVECK). Serine 553 carries O-linked (Xyl) serine glycosylation. The EGF-like 2 domain maps to 646–690 (PRNPCTDGTHDCNKNAKCNYLGHYSDPMYRCECKPGYAGNGIICG). TSP type-3 repeat units follow at residues 691–726 (EDTD…NSGQ), 727–762 (EDYD…NPAQ), 763–785 (YDYD…NPDQ), 786–821 (ADTD…NVDQ), 822–844 (KDTD…NPDQ), 845–882 (LDSD…NANQ), 883–918 (ADHD…NPDQ), and 919–954 (KDSD…DISE). N-linked (GlcNAc...) asparagine glycosylation is present at asparagine 708. Positions 839-944 (EHNPDQLDSD…DQDKVPDIDD (106 aa)) are disordered. Basic and acidic residues-rich tracts occupy residues 840–854 (HNPD…RIGD), 883–894 (ADHDKDGKGDAC), and 917–941 (DQKD…KVPD). The Cell attachment site signature appears at 926-928 (RGD). A TSP C-terminal domain is found at 958–1170 (RRFQMIPLDP…SDLKYECRDS (213 aa)). N-linked (GlcNAc...) asparagine glycosylation is found at asparagine 1067 and asparagine 1085.

It belongs to the thrombospondin family. Homotrimer; disulfide-linked. Can bind to fibrinogen, fibronectin, laminin, type V collagen and integrins alpha-V/beta-1, alpha-V/beta-3 and alpha-IIb/beta-3. Binds heparin. Interacts (via the C-terminal domain) with CD47. Interacts (via the TSP type I repeats) with CD36; the interaction conveys an antiangiogenic effect. Interacts (via the TSP type I repeats) with HRG; the interaction blocks the antiangiogenic effect of THBS1 with CD36. Interacts with ATF6 (via lumenal domain). Interacts with FN1; this interaction is enhanced by TNFAIP6, which may act as a bridging molecule between FN1 and THBS1. Interacts with SIRPA; the interaction stimulates phosphorylation of SIRPA. In terms of tissue distribution, odontoblasts.

The protein localises to the secreted. It is found in the cell surface. Its subcellular location is the extracellular space. It localises to the extracellular matrix. The protein resides in the endoplasmic reticulum. The protein localises to the sarcoplasmic reticulum. In terms of biological role, adhesive glycoprotein that mediates cell-to-cell and cell-to-matrix interactions. Multifunctional, involved in inflammation, angiogenesis, wound healing, reactive oxygen species (ROS) signaling, nitrous oxide (NO) signaling, apoptosis, senescence, aging, cellular self-renewal, stemness, and cardiovascular and metabolic homeostasis. Negatively modulates dendritic cell activation and cytokine release, as part of an autocrine feedback loop, contributing to the resolution of inflammation and immune homeostasis. Ligand for receptor CD47. Modulates nitrous oxide (NO) signaling via CD47, hence playing a role as a pressor agent, supporting blood pressure. Plays a role in endothelial cell senescence, acting via CD47, by increasing the abundance and activation of NADPH oxidase NOX1, and so generating excess ROS. Inhibits stem cell self-renewal, acting via CD47 signaling, probably by regulation of the stem cell transcription factors POU5F1/OCT4, SOX2, MYC/c-Myc and KLF4. Negatively modulates wound healing, acting via CD47. Ligand for receptor CD36. Involved in inducing apoptosis in podocytes in response to elevated free fatty acids, acting via CD36. Plays a role in suppressing angiogenesis, acting, depending on context, via CD36 or CD47. Promotes cellular senescence in a TP53-CDKN1A-RB1 signaling-dependent manner. Ligand for immunoglobulin-like cell surface receptor SIRPA. Involved in ROS signaling in non-phagocytic cells, stimulating NADPH oxidase-derived ROS production, acting via interaction with SIRPA. Plays a role in metabolic dysfunction in diet-induced obesity, perhaps acting by exacerbating adipose inflammatory activity; its effects may be mediated, at least in part, through enhanced adipocyte proliferation. Plays a role in ER stress response, via its interaction with the activating transcription factor 6 alpha (ATF6) which produces adaptive ER stress response factors. May be involved in age-related conditions, including metabolic dysregulation, during normal aging. This Bos taurus (Bovine) protein is Thrombospondin-1 (THBS1).